The sequence spans 96 residues: Large ribosomal subunit protein eL21 (96 aa).

Residues Met1–Gly66 form a disordered region.

This sequence belongs to the eukaryotic ribosomal protein eL21 family. Part of the 50S ribosomal subunit. Interacts with protein L18 and binds the 5S rRNA. Has been cross-linked to L18.

In terms of biological role, this is one of 5 proteins that mediate the attachment of the 5S rRNA onto the large ribosomal subunit, stabilizing the orientation of adjacent RNA domains. This chain is Large ribosomal subunit protein eL21 (rpl21e), found in Haloarcula marismortui (strain ATCC 43049 / DSM 3752 / JCM 8966 / VKM B-1809) (Halobacterium marismortui).